Here is a 312-residue protein sequence, read N- to C-terminus: Ribose-phosphate pyrophosphokinase (312 aa).

ATP contacts are provided by residues 38–40 (DGE) and 97–98 (RQ). 2 residues coordinate Mg(2+): His131 and Asp170. Lys193 is a catalytic residue. D-ribose 5-phosphate is bound by residues Arg195, Asp219, and 223–227 (DTAGT).

The protein belongs to the ribose-phosphate pyrophosphokinase family. Class I subfamily. As to quaternary structure, homohexamer. The cofactor is Mg(2+).

It is found in the cytoplasm. It catalyses the reaction D-ribose 5-phosphate + ATP = 5-phospho-alpha-D-ribose 1-diphosphate + AMP + H(+). Its pathway is metabolic intermediate biosynthesis; 5-phospho-alpha-D-ribose 1-diphosphate biosynthesis; 5-phospho-alpha-D-ribose 1-diphosphate from D-ribose 5-phosphate (route I): step 1/1. Involved in the biosynthesis of the central metabolite phospho-alpha-D-ribosyl-1-pyrophosphate (PRPP) via the transfer of pyrophosphoryl group from ATP to 1-hydroxyl of ribose-5-phosphate (Rib-5-P). The protein is Ribose-phosphate pyrophosphokinase of Leptospira interrogans serogroup Icterohaemorrhagiae serovar copenhageni (strain Fiocruz L1-130).